Here is an 89-residue protein sequence, read N- to C-terminus: Probable Fe(2+)-trafficking protein (89 aa).

This sequence belongs to the Fe(2+)-trafficking protein family.

Its function is as follows. Could be a mediator in iron transactions between iron acquisition and iron-requiring processes, such as synthesis and/or repair of Fe-S clusters in biosynthetic enzymes. The chain is Probable Fe(2+)-trafficking protein from Stenotrophomonas maltophilia (strain R551-3).